A 234-amino-acid chain; its full sequence is Phosphatidylcholine synthase (234 aa).

The Cytoplasmic portion of the chain corresponds to 1-3 (MKN). The chain crosses the membrane as a helical span at residues 4 to 24 (INLILAWLVHIFTASGLIVGL). Residues 25 to 26 (YS) lie on the Periplasmic side of the membrane. A helical transmembrane segment spans residues 27-47 (IISIVNGNYSLLLKLTVIGLI). The Cytoplasmic segment spans residues 48-75 (IDGIDGTMARKLKVKELIPEIDGTLLDN). A helical transmembrane segment spans residues 76-96 (ITDYINYTFIPVIFFYLGEFI). Residues 97–98 (EE) are Periplasmic-facing. A helical transmembrane segment spans residues 99–116 (KYKVAICIGILLSSAYQF). Topologically, residues 117-126 (SRTDAKTNDN) are cytoplasmic. A helical membrane pass occupies residues 127–147 (YFRGFPSLWNLFVILNIIFKM). The Periplasmic portion of the chain corresponds to 148–149 (EQ). A helical transmembrane segment spans residues 150–170 (ITNLITMSICIITSFIPIKFI). Topologically, residues 171-180 (YPSKTKELRK) are cytoplasmic. Residues 181 to 201 (ITIPITIISCLIFVVSIFSEL) traverse the membrane as a helical segment. The Periplasmic portion of the chain corresponds to 202–207 (STTALK). Residues 208-228 (MAKTVLILYFAYLTLASIYLT) traverse the membrane as a helical segment. The Cytoplasmic portion of the chain corresponds to 229-234 (YKTRNR).

Belongs to the CDP-alcohol phosphatidyltransferase class-I family. Mn(2+) serves as cofactor.

It localises to the cell inner membrane. It catalyses the reaction a CDP-1,2-diacyl-sn-glycerol + choline = a 1,2-diacyl-sn-glycero-3-phosphocholine + CMP + H(+). Condenses choline with CDP-diglyceride to produce phosphatidylcholine and CMP. The sequence is that of Phosphatidylcholine synthase from Borreliella burgdorferi (strain ATCC 35210 / DSM 4680 / CIP 102532 / B31) (Borrelia burgdorferi).